The following is a 333-amino-acid chain: MQTNLLKPKAINVEPLSAAKGAHRAKVTLEPFERGYGHTLGNALRRVLLSSMVGYAPTEVTIAGVLHEYSAIDGVQEDVVHVMLNLKGVVFRLHNRDEVTLVLRKEGEGPVKAGDIQTPHDVEIINPDHVITHLSQGGKLDMQIKVEKGRGYVPGTMRRFGDEPTKSIGRIVLDASFSPVRRVSYTVESARVEQRTDLDKLVMEIETNGAITPEEAIRASAKILVEQLAVFAQLEGQINDIFDAQPAQRSTQFDPILLRPVDELELTVRSANCLKAENIYYIGDLIQRTETELLKTPNLGRKSLNEIKEVLASRGLTLGGRLENWPPQGLDKR.

The segment at 1–235 is alpha N-terminal domain (alpha-NTD); it reads MQTNLLKPKA…EQLAVFAQLE (235 aa). The tract at residues 253–333 is alpha C-terminal domain (alpha-CTD); sequence FDPILLRPVD…NWPPQGLDKR (81 aa).

It belongs to the RNA polymerase alpha chain family. In terms of assembly, homodimer. The RNAP catalytic core consists of 2 alpha, 1 beta, 1 beta' and 1 omega subunit. When a sigma factor is associated with the core the holoenzyme is formed, which can initiate transcription.

It catalyses the reaction RNA(n) + a ribonucleoside 5'-triphosphate = RNA(n+1) + diphosphate. Functionally, DNA-dependent RNA polymerase catalyzes the transcription of DNA into RNA using the four ribonucleoside triphosphates as substrates. This Methylibium petroleiphilum (strain ATCC BAA-1232 / LMG 22953 / PM1) protein is DNA-directed RNA polymerase subunit alpha.